We begin with the raw amino-acid sequence, 252 residues long: Thiazole synthase (252 aa).

The active-site Schiff-base intermediate with DXP is Lys-91. 1-deoxy-D-xylulose 5-phosphate contacts are provided by residues Gly-152, 179–180, and 201–202; these read AG and NT.

Belongs to the ThiG family. In terms of assembly, homotetramer. Forms heterodimers with either ThiH or ThiS.

Its subcellular location is the cytoplasm. It catalyses the reaction [ThiS sulfur-carrier protein]-C-terminal-Gly-aminoethanethioate + 2-iminoacetate + 1-deoxy-D-xylulose 5-phosphate = [ThiS sulfur-carrier protein]-C-terminal Gly-Gly + 2-[(2R,5Z)-2-carboxy-4-methylthiazol-5(2H)-ylidene]ethyl phosphate + 2 H2O + H(+). It participates in cofactor biosynthesis; thiamine diphosphate biosynthesis. In terms of biological role, catalyzes the rearrangement of 1-deoxy-D-xylulose 5-phosphate (DXP) to produce the thiazole phosphate moiety of thiamine. Sulfur is provided by the thiocarboxylate moiety of the carrier protein ThiS. In vitro, sulfur can be provided by H(2)S. The chain is Thiazole synthase from Erwinia pyrifoliae (strain DSM 12162 / Ep1/96).